We begin with the raw amino-acid sequence, 437 residues long: Glutamyl-tRNA reductase (437 aa).

Substrate is bound by residues 49–52 (TCNR), serine 109, 114–116 (ETQ), and glutamine 120. The active-site Nucleophile is the cysteine 50. 189 to 194 (GAGEMS) is an NADP(+) binding site.

This sequence belongs to the glutamyl-tRNA reductase family. In terms of assembly, homodimer.

It carries out the reaction (S)-4-amino-5-oxopentanoate + tRNA(Glu) + NADP(+) = L-glutamyl-tRNA(Glu) + NADPH + H(+). Its pathway is porphyrin-containing compound metabolism; protoporphyrin-IX biosynthesis; 5-aminolevulinate from L-glutamyl-tRNA(Glu): step 1/2. In terms of biological role, catalyzes the NADPH-dependent reduction of glutamyl-tRNA(Glu) to glutamate 1-semialdehyde (GSA). In Listeria welshimeri serovar 6b (strain ATCC 35897 / DSM 20650 / CCUG 15529 / CIP 8149 / NCTC 11857 / SLCC 5334 / V8), this protein is Glutamyl-tRNA reductase.